A 254-amino-acid polypeptide reads, in one-letter code: Alcohol dehydrogenase (254 aa).

10 to 33 contributes to the NAD(+) binding site; it reads FVAGLGGIGLDTSREIVKSGPKNL. Serine 138 is a binding site for substrate. Tyrosine 151 acts as the Proton acceptor in catalysis.

The protein belongs to the short-chain dehydrogenases/reductases (SDR) family. As to quaternary structure, homodimer.

The catalysed reaction is a primary alcohol + NAD(+) = an aldehyde + NADH + H(+). It catalyses the reaction a secondary alcohol + NAD(+) = a ketone + NADH + H(+). This is Alcohol dehydrogenase (Adh) from Drosophila affinidisjuncta (Fruit fly).